The following is a 693-amino-acid chain: Subtilisin-like protease SBT4.10 (693 aa).

A signal peptide spans 1–25 (MAKLREASFCALACVLVLFLSFVSA). Residues 26 to 113 (DTYNRQDKQV…VFPSKKYKLH (88 aa)) constitute a propeptide, activation peptide. In terms of domain architecture, Inhibitor I9 spans 35–113 (VYVVYMGSLP…VFPSKKYKLH (79 aa)). In terms of domain architecture, Peptidase S8 spans 117-536 (SWDFMGLKEG…SGHIDPIAAI (420 aa)). Catalysis depends on D145, which acts as the Charge relay system. Residue N176 is glycosylated (N-linked (GlcNAc...) asparagine). H200 (charge relay system) is an active-site residue. Residues N215, N223, N368, N413, and N467 are each glycosylated (N-linked (GlcNAc...) asparagine). Residues 354-396 (QYPLVYETSVEKCNNESLTTLALSFLTLTPQSNEQIISMFHTL) enclose the PA domain. Residue S475 is the Charge relay system of the active site. Residues N559, N603, and N613 are each glycosylated (N-linked (GlcNAc...) asparagine).

This sequence belongs to the peptidase S8 family. In terms of processing, the C-terminal propeptide is autocleaved.

It is found in the secreted. This is Subtilisin-like protease SBT4.10 from Arabidopsis thaliana (Mouse-ear cress).